A 364-amino-acid polypeptide reads, in one-letter code: Dihydroorotate dehydrogenase (quinone) (364 aa).

FMN contacts are provided by residues 61–65 (AGFDK) and Ser-85. Residue Lys-65 coordinates substrate. 110–114 (NRMGF) provides a ligand contact to substrate. Residues Asn-139 and Asn-170 each coordinate FMN. Asn-170 contacts substrate. Ser-173 (nucleophile) is an active-site residue. Residue Asn-175 coordinates substrate. 2 residues coordinate FMN: Lys-214 and Ser-242. Position 243-244 (243-244 (NT)) interacts with substrate. Residues Gly-266, Gly-295, and 316-317 (YS) each bind FMN.

The protein belongs to the dihydroorotate dehydrogenase family. Type 2 subfamily. As to quaternary structure, monomer. FMN serves as cofactor.

It localises to the cell membrane. It catalyses the reaction (S)-dihydroorotate + a quinone = orotate + a quinol. Its pathway is pyrimidine metabolism; UMP biosynthesis via de novo pathway; orotate from (S)-dihydroorotate (quinone route): step 1/1. Functionally, catalyzes the conversion of dihydroorotate to orotate with quinone as electron acceptor. The protein is Dihydroorotate dehydrogenase (quinone) of Bradyrhizobium sp. (strain BTAi1 / ATCC BAA-1182).